A 347-amino-acid chain; its full sequence is Protein-glutamate methylesterase/protein-glutamine glutaminase (347 aa).

Residues Arg-6–Lys-123 enclose the Response regulatory domain. Asp-57 carries the post-translational modification 4-aspartylphosphate. The region spanning Phe-150–Arg-342 is the CheB-type methylesterase domain. Residues Ser-162, His-188, and Asp-284 contribute to the active site.

Belongs to the CheB family. In terms of processing, phosphorylated by CheA. Phosphorylation of the N-terminal regulatory domain activates the methylesterase activity.

The protein localises to the cytoplasm. It carries out the reaction [protein]-L-glutamate 5-O-methyl ester + H2O = L-glutamyl-[protein] + methanol + H(+). It catalyses the reaction L-glutaminyl-[protein] + H2O = L-glutamyl-[protein] + NH4(+). Functionally, involved in chemotaxis. Part of a chemotaxis signal transduction system that modulates chemotaxis in response to various stimuli. Catalyzes the demethylation of specific methylglutamate residues introduced into the chemoreceptors (methyl-accepting chemotaxis proteins or MCP) by CheR. Also mediates the irreversible deamidation of specific glutamine residues to glutamic acid. The chain is Protein-glutamate methylesterase/protein-glutamine glutaminase from Rhizobium etli (strain ATCC 51251 / DSM 11541 / JCM 21823 / NBRC 15573 / CFN 42).